We begin with the raw amino-acid sequence, 606 residues long: Probable glutamine--fructose-6-phosphate aminotransferase [isomerizing] (606 aa).

Catalysis depends on Cys-2, which acts as the For GATase activity. The region spanning 2-224 (CGISACLNHT…DNDYGYITNN (223 aa)) is the Glutamine amidotransferase type-2 domain. SIS domains are found at residues 282 to 427 (FFPE…SLDN) and 458 to 596 (LLEF…PDYP).

The enzyme catalyses D-fructose 6-phosphate + L-glutamine = D-glucosamine 6-phosphate + L-glutamate. The protein operates within nucleotide-sugar biosynthesis; UDP-N-acetyl-alpha-D-glucosamine biosynthesis; alpha-D-glucosamine 6-phosphate from D-fructose 6-phosphate: step 1/1. Controls the flux of glucose into the hexosamine pathway. Most likely involved in regulating the availability of precursors for glycosylation of proteins (Potential). This Acanthamoeba polyphaga (Amoeba) protein is Probable glutamine--fructose-6-phosphate aminotransferase [isomerizing].